The chain runs to 325 residues: Acetyl-coenzyme A carboxylase carboxyl transferase subunit alpha (325 aa).

A CoA carboxyltransferase C-terminal domain is found at 35–292; it reads EINKLEARLE…DDVLKRSLRE (258 aa).

The protein belongs to the AccA family. Acetyl-CoA carboxylase is a heterohexamer composed of biotin carboxyl carrier protein (AccB), biotin carboxylase (AccC) and two subunits each of ACCase subunit alpha (AccA) and ACCase subunit beta (AccD).

Its subcellular location is the cytoplasm. It carries out the reaction N(6)-carboxybiotinyl-L-lysyl-[protein] + acetyl-CoA = N(6)-biotinyl-L-lysyl-[protein] + malonyl-CoA. It functions in the pathway lipid metabolism; malonyl-CoA biosynthesis; malonyl-CoA from acetyl-CoA: step 1/1. Functionally, component of the acetyl coenzyme A carboxylase (ACC) complex. First, biotin carboxylase catalyzes the carboxylation of biotin on its carrier protein (BCCP) and then the CO(2) group is transferred by the carboxyltransferase to acetyl-CoA to form malonyl-CoA. In Anoxybacillus flavithermus (strain DSM 21510 / WK1), this protein is Acetyl-coenzyme A carboxylase carboxyl transferase subunit alpha.